Consider the following 317-residue polypeptide: Cytochrome f (317 aa).

A signal peptide spans 1–34 (MKGLKNQIMKKTSLFICTLLFISSIVFHPKITFA). The heme site is built by Y35, C55, C58, and H59. Residues 284–304 (VIGLIAFFIGVGLTQILLVLK) form a helical membrane-spanning segment.

It belongs to the cytochrome f family. The 4 large subunits of the cytochrome b6-f complex are cytochrome b6, subunit IV (17 kDa polypeptide, PetD), cytochrome f and the Rieske protein, while the 4 small subunits are PetG, PetL, PetM and PetN. The complex functions as a dimer. It depends on heme as a cofactor.

The protein resides in the cellular thylakoid membrane. In terms of biological role, component of the cytochrome b6-f complex, which mediates electron transfer between photosystem II (PSII) and photosystem I (PSI), cyclic electron flow around PSI, and state transitions. In Prochlorococcus marinus (strain MIT 9301), this protein is Cytochrome f.